The following is a 118-amino-acid chain: Holo-[acyl-carrier-protein] synthase (118 aa).

Mg(2+) is bound by residues Asp-9 and Glu-52.

Belongs to the P-Pant transferase superfamily. AcpS family. It depends on Mg(2+) as a cofactor.

It localises to the cytoplasm. The catalysed reaction is apo-[ACP] + CoA = holo-[ACP] + adenosine 3',5'-bisphosphate + H(+). In terms of biological role, transfers the 4'-phosphopantetheine moiety from coenzyme A to a Ser of acyl-carrier-protein. The chain is Holo-[acyl-carrier-protein] synthase from Frankia casuarinae (strain DSM 45818 / CECT 9043 / HFP020203 / CcI3).